Consider the following 179-residue polypeptide: MVQAWYMDDSAEDQRKPHRLQQDVPVSLEQLKALGVDSLSLDADRYESDPELAKIRKENNYTWMDIITIHKDTMPNYEEKLKIFYEEHLHLDDEIRYILEGSGYFDVRDQKDKWIRIFMQKGDMITLPAGIYHRFTLDENNYVKAMRLFVGDPVWTPFNRPADNCEAREKYVQFLAQTA.

Residues histidine 88, histidine 90, glutamate 94, and histidine 133 each coordinate Fe(2+). Ni(2+) contacts are provided by histidine 88, histidine 90, glutamate 94, and histidine 133.

The protein belongs to the acireductone dioxygenase (ARD) family. As to quaternary structure, monomer. Interacts with MMP14. Fe(2+) is required as a cofactor. Ni(2+) serves as cofactor.

It localises to the cytoplasm. The protein resides in the nucleus. It is found in the cell membrane. It carries out the reaction 1,2-dihydroxy-5-(methylsulfanyl)pent-1-en-3-one + O2 = 4-methylsulfanyl-2-oxobutanoate + formate + 2 H(+). The enzyme catalyses 1,2-dihydroxy-5-(methylsulfanyl)pent-1-en-3-one + O2 = 3-(methylsulfanyl)propanoate + CO + formate + 2 H(+). Its pathway is amino-acid biosynthesis; L-methionine biosynthesis via salvage pathway; L-methionine from S-methyl-5-thio-alpha-D-ribose 1-phosphate: step 5/6. Functionally, catalyzes 2 different reactions between oxygen and the acireductone 1,2-dihydroxy-3-keto-5-methylthiopentene (DHK-MTPene) depending upon the metal bound in the active site. Fe-containing acireductone dioxygenase (Fe-ARD) produces formate and 2-keto-4-methylthiobutyrate (KMTB), the alpha-ketoacid precursor of methionine in the methionine recycle pathway. Ni-containing acireductone dioxygenase (Ni-ARD) produces methylthiopropionate, carbon monoxide and formate, and does not lie on the methionine recycle pathway. This is Acireductone dioxygenase (adi1) from Xenopus laevis (African clawed frog).